Consider the following 318-residue polypeptide: Apo-salmochelin esterase (318 aa).

A helical membrane pass occupies residues 13-32 (KAIFFHLSCLTLICSAQVYA). Residues Ser-189 and His-287 contribute to the active site.

It belongs to the esterase D family. Monomer.

It localises to the cell inner membrane. It catalyses the reaction enterobactin + H2O = N-(2,3-dihydroxybenzoyl)-L-serine trimer. The catalysed reaction is monoglucosyl-enterobactin + H2O = [N-(2,3-dihydroxybenzoyl)-L-seryl]2-N-(C-5-[deoxy-beta-D-glucosyl]-2,3-dihydroxybenzoyl)-L-serine + H(+). It carries out the reaction diglucosyl-enterobactin + H2O = N-(2,3-dihydroxybenzoyl)-L-seryl-[N-(C-5-[deoxy-beta-D-glucosyl]-2,3-dihydroxybenzoyl)-L-serine]2 + H(+). The enzyme catalyses triglucosyl-enterobactin + H2O = [N-(C-5-[deoxy-beta-D-glucosyl]-2,3-dihydroxybenzoyl)-L-serine]3 + H(+). Catalyzes the hydrolysis of both the apo and Fe3(+)-bound forms of enterobactin (Ent), monoglucosyl-C-Ent (MGE), diglucosyl-C-Ent (DGE) and triglucosyl-C-Ent (TGE). It prefers apo siderophores as substrates and hydrolyzes the Fe3(+)-bound siderophores very inefficiently. Tends to hydrolyze the trilactone just once to produce linearized trimers. May hydrolyze and linearize some or all of apo enterobactins while they are being exported. The chain is Apo-salmochelin esterase from Escherichia coli O6:H1 (strain CFT073 / ATCC 700928 / UPEC).